The primary structure comprises 370 residues: Cytochrome b (370 aa).

The next 4 helical transmembrane spans lie at 25–45, 69–90, 105–125, and 170–190; these read FGSMLIACSTLQVLTGFFLAV, WLMQNLHAIGASMFFICIYIHI, WLSGTTLLIMLMATAFFGYVL, and FFALHFILPFGIISMSSLHVM. Heme b is bound by residues His75 and His89. His174 and His188 together coordinate heme b. His193 serves as a coordination point for a ubiquinone. Transmembrane regions (helical) follow at residues 218 to 238, 280 to 300, 312 to 332, and 339 to 358; these read YKDLLMLAAMTTLLLLIVSFS, LGGALALTMSIVILLTVPFTH, FMQMTFWLFAATFMVITWTAT, and FTLIGQAASMIYFLFFISNP.

Belongs to the cytochrome b family. The cytochrome bc1 complex contains 3 respiratory subunits (MT-CYB, CYC1 and UQCRFS1), 2 core proteins (UQCRC1 and UQCRC2) and probably 6 low-molecular weight proteins. Heme b is required as a cofactor.

The protein localises to the mitochondrion inner membrane. Component of the ubiquinol-cytochrome c reductase complex (complex III or cytochrome b-c1 complex) that is part of the mitochondrial respiratory chain. The b-c1 complex mediates electron transfer from ubiquinol to cytochrome c. Contributes to the generation of a proton gradient across the mitochondrial membrane that is then used for ATP synthesis. The sequence is that of Cytochrome b (MT-CYB) from Eunectes notaeus (Yellow anaconda).